The chain runs to 466 residues: Glutamate-1-semialdehyde 2,1-aminomutase (466 aa).

Lys292 bears the N6-(pyridoxal phosphate)lysine mark.

Belongs to the class-III pyridoxal-phosphate-dependent aminotransferase family. HemL subfamily. As to quaternary structure, homodimer. It depends on pyridoxal 5'-phosphate as a cofactor.

Its subcellular location is the cytoplasm. It carries out the reaction (S)-4-amino-5-oxopentanoate = 5-aminolevulinate. It participates in porphyrin-containing compound metabolism; protoporphyrin-IX biosynthesis; 5-aminolevulinate from L-glutamyl-tRNA(Glu): step 2/2. This is Glutamate-1-semialdehyde 2,1-aminomutase from Tropheryma whipplei (strain TW08/27) (Whipple's bacillus).